The following is a 426-amino-acid chain: Enolase (426 aa).

Gln-162 is a binding site for (2R)-2-phosphoglycerate. The active-site Proton donor is Glu-204. Asp-241, Glu-284, and Asp-311 together coordinate Mg(2+). Residues Lys-336, Arg-365, Ser-366, and Lys-387 each coordinate (2R)-2-phosphoglycerate. The Proton acceptor role is filled by Lys-336.

This sequence belongs to the enolase family. As to quaternary structure, component of the RNA degradosome, a multiprotein complex involved in RNA processing and mRNA degradation. The cofactor is Mg(2+).

Its subcellular location is the cytoplasm. The protein resides in the secreted. It localises to the cell surface. It catalyses the reaction (2R)-2-phosphoglycerate = phosphoenolpyruvate + H2O. Its pathway is carbohydrate degradation; glycolysis; pyruvate from D-glyceraldehyde 3-phosphate: step 4/5. Catalyzes the reversible conversion of 2-phosphoglycerate (2-PG) into phosphoenolpyruvate (PEP). It is essential for the degradation of carbohydrates via glycolysis. In Hydrogenovibrio crunogenus (strain DSM 25203 / XCL-2) (Thiomicrospira crunogena), this protein is Enolase.